A 399-amino-acid chain; its full sequence is Putative 8-amino-7-oxononanoate synthase (399 aa).

Residue R24 participates in substrate binding. 111–112 serves as a coordination point for pyridoxal 5'-phosphate; the sequence is GW. H141 contacts substrate. Pyridoxal 5'-phosphate-binding positions include S189, 214-217, and 243-246; these read DEAH and TFSK. K246 carries the post-translational modification N6-(pyridoxal phosphate)lysine. T360 is a binding site for substrate.

This sequence belongs to the class-II pyridoxal-phosphate-dependent aminotransferase family. BioF subfamily. In terms of assembly, homodimer. Pyridoxal 5'-phosphate serves as cofactor.

The enzyme catalyses 6-carboxyhexanoyl-[ACP] + L-alanine + H(+) = (8S)-8-amino-7-oxononanoate + holo-[ACP] + CO2. The protein operates within cofactor biosynthesis; biotin biosynthesis. Functionally, catalyzes the decarboxylative condensation of pimeloyl-[acyl-carrier protein] and L-alanine to produce 8-amino-7-oxononanoate (AON), [acyl-carrier protein], and carbon dioxide. The sequence is that of Putative 8-amino-7-oxononanoate synthase (bioF) from Bordetella bronchiseptica (strain ATCC BAA-588 / NCTC 13252 / RB50) (Alcaligenes bronchisepticus).